The chain runs to 152 residues: MSDTIAVEIKQLPHAEGLPLPAYQSAHAAGLDLCAANSADAPLLLAPGSYVLVPTGLTIALPENYEAQVRPRSGLAAKHGVTVLNAPGTIDADYRGEIGVLLINHGDAPFTIRRGERIAQMVIAPVVRAELIGVETLSETARGVGGFGSTGR.

Substrate is bound by residues 72–74, N85, and 89–91; these read RSG and TID.

The protein belongs to the dUTPase family. The cofactor is Mg(2+).

The catalysed reaction is dUTP + H2O = dUMP + diphosphate + H(+). Its pathway is pyrimidine metabolism; dUMP biosynthesis; dUMP from dCTP (dUTP route): step 2/2. Its function is as follows. This enzyme is involved in nucleotide metabolism: it produces dUMP, the immediate precursor of thymidine nucleotides and it decreases the intracellular concentration of dUTP so that uracil cannot be incorporated into DNA. The chain is Deoxyuridine 5'-triphosphate nucleotidohydrolase from Rhodopseudomonas palustris (strain BisB5).